Reading from the N-terminus, the 483-residue chain is Probable glycine dehydrogenase (decarboxylating) subunit 2 (483 aa).

Position 264 is an N6-(pyridoxal phosphate)lysine (Lys264).

It belongs to the GcvP family. C-terminal subunit subfamily. In terms of assembly, the glycine cleavage system is composed of four proteins: P, T, L and H. In this organism, the P 'protein' is a heterodimer of two subunits. Pyridoxal 5'-phosphate serves as cofactor.

It carries out the reaction N(6)-[(R)-lipoyl]-L-lysyl-[glycine-cleavage complex H protein] + glycine + H(+) = N(6)-[(R)-S(8)-aminomethyldihydrolipoyl]-L-lysyl-[glycine-cleavage complex H protein] + CO2. In terms of biological role, the glycine cleavage system catalyzes the degradation of glycine. The P protein binds the alpha-amino group of glycine through its pyridoxal phosphate cofactor; CO(2) is released and the remaining methylamine moiety is then transferred to the lipoamide cofactor of the H protein. This Nitrosomonas eutropha (strain DSM 101675 / C91 / Nm57) protein is Probable glycine dehydrogenase (decarboxylating) subunit 2.